Here is an 89-residue protein sequence, read N- to C-terminus: UPF0213 protein LMOf2365_0181 (89 aa).

In terms of domain architecture, GIY-YIG spans 5 to 80 (SEHFFYVLKC…KKLSRKNKDA (76 aa)).

It belongs to the UPF0213 family.

This is UPF0213 protein LMOf2365_0181 from Listeria monocytogenes serotype 4b (strain F2365).